Consider the following 427-residue polypeptide: UPF0229 protein YeaH (427 aa).

Positions 79-90 (NDHFVQNDRIER) are enriched in basic and acidic residues. Positions 79-110 (NDHFVQNDRIERPQGGGGGSGSGQGQASQDGE) are disordered. Residues 92–102 (QGGGGGSGSGQ) are compositionally biased toward gly residues.

This sequence belongs to the UPF0229 family.

The sequence is that of UPF0229 protein YeaH from Escherichia coli O9:H4 (strain HS).